The primary structure comprises 189 residues: uncharacterized protein (189 aa).

5 helical membrane-spanning segments follow: residues 4-21, 34-56, 79-101, 122-144, and 148-170; these read AISTVLYVLIPFLVFLFR, AFYPFHLFLPMIVVFITGIPLIL, LLVIDTMLFQIMLLQPFITLIYS, RILSSLFAFVIAGIALPEIVLLN, and ILHVDYLFFVHLIASSVFANLLV.

The protein localises to the cell membrane. This is an uncharacterized protein from Archaeoglobus fulgidus (strain ATCC 49558 / DSM 4304 / JCM 9628 / NBRC 100126 / VC-16).